The primary structure comprises 333 residues: Eukaryotic translation initiation factor 2 subunit 2 (333 aa).

Disordered stretches follow at residues Met-1–Met-120 and Ile-139–Pro-165. N-acetylserine is present on Ser-2. The residue at position 2 (Ser-2) is a Phosphoserine. At Ser-13 the chain carries Phosphoserine; by PKC; in vitro. Basic residues predominate over residues Ser-13 to Pro-22. Position 36 is a phosphothreonine (Thr-36). The span at Glu-40 to Asp-51 shows a compositional bias: basic and acidic residues. Ser-67 carries the post-translational modification Phosphoserine; by CK2. The segment covering Glu-96–Asn-105 has biased composition (basic and acidic residues). Lys-102 participates in a covalent cross-link: Glycyl lysine isopeptide (Lys-Gly) (interchain with G-Cter in SUMO2). Acidic residues-rich tracts occupy residues Asp-106–Asp-118 and Ile-139–Glu-149. Residue Ser-158 is modified to Phosphoserine. Ser-218 bears the Phosphoserine; by PKA; in vitro mark. Residues Lys-265 and Lys-293 each carry the N6-acetyllysine modification. The segment at Cys-281 to Cys-305 adopts a C4-type zinc-finger fold.

This sequence belongs to the eIF-2-beta/eIF-5 family. In terms of assembly, eukaryotic translation initiation factor 2 eIF2 is a heterotrimeric complex composed of an alpha (EIF2S1), a beta (EIF2S2) and a gamma (EIF2S3) chain. eIF2 is member of the 43S pre-initiation complex (43S PIC). eIF2 forms a complex with at least CELF1/CUGBP1, CALR, CALR3, EIF2S1, EIF2S2, HSP90B1 and HSPA5. Interacts with BZW2/5MP1. Interacts with EIF5. The N-terminus is blocked.

It localises to the cytoplasm. It is found in the cytosol. Its function is as follows. Component of the eIF2 complex that functions in the early steps of protein synthesis by forming a ternary complex with GTP and initiator tRNA. This complex binds to a 40S ribosomal subunit, followed by mRNA binding to form the 43S pre-initiation complex (43S PIC). Junction of the 60S ribosomal subunit to form the 80S initiation complex is preceded by hydrolysis of the GTP bound to eIF2 and release of an eIF2-GDP binary complex. In order for eIF2 to recycle and catalyze another round of initiation, the GDP bound to eIF2 must exchange with GTP by way of a reaction catalyzed by eIF2B. The polypeptide is Eukaryotic translation initiation factor 2 subunit 2 (EIF2S2) (Oryctolagus cuniculus (Rabbit)).